The following is a 1113-amino-acid chain: Receptor-type guanylate cyclase gcy-18 (1113 aa).

A signal peptide spans 1–18 (MLKTLLFILIFFNIPIIA). At 19 to 499 (IEEIPDIKEN…RGQRCSYLLE (481 aa)) the chain is on the extracellular side. Residues Asn-72, Asn-369, and Asn-456 are each glycosylated (N-linked (GlcNAc...) asparagine). The chain crosses the membrane as a helical span at residues 500–520 (ISVGSLIILLILISVVFFFLF). Over 521–1113 (RYCENKQLEK…TNYIQNVEGV (593 aa)) the chain is Cytoplasmic. A Protein kinase domain is found at 543-848 (IDEEQVKSMM…RVRLNTEMVL (306 aa)). The stretch at 853-884 (SLVDQMMKMMEQYANNLEKLVAERTGMLEEAN) forms a coiled coil. The Guanylate cyclase domain occupies 918–1048 (TILFSDIVGF…DTVNVSSRME (131 aa)). Residues Asp-923, Ile-924, and Asp-967 each coordinate Mg(2+).

The protein belongs to the adenylyl cyclase class-4/guanylyl cyclase family. In terms of tissue distribution, expressed specifically in AFD sensory neurons.

It is found in the cell membrane. The protein resides in the cell projection. Its subcellular location is the cilium. It catalyses the reaction GTP = 3',5'-cyclic GMP + diphosphate. Guanylate cyclase involved in the production of the second messenger cGMP. Regulates thermotaxis responses in AFD sensory neurons. May regulate AFD neuronal activity such as calcium responses to temperature gradients. In Caenorhabditis elegans, this protein is Receptor-type guanylate cyclase gcy-18.